An 83-amino-acid chain; its full sequence is Alpha-neurotoxin NTX-1 (83 aa).

Positions M1 to T21 are cleaved as a signal peptide. Intrachain disulfides connect C24–C45, C38–C62, C64–C75, and C76–C81.

The protein belongs to the three-finger toxin family. Short-chain subfamily. Type I alpha-neurotoxin sub-subfamily. In terms of tissue distribution, expressed by the venom gland.

It localises to the secreted. Functionally, binds to muscle nicotinic acetylcholine receptor (nAChR) and inhibit acetylcholine from binding to the receptor, thereby impairing neuromuscular transmission. This is Alpha-neurotoxin NTX-1 from Naja sputatrix (Malayan spitting cobra).